A 205-amino-acid chain; its full sequence is Large ribosomal subunit protein bL25 (205 aa).

Belongs to the bacterial ribosomal protein bL25 family. CTC subfamily. As to quaternary structure, part of the 50S ribosomal subunit; part of the 5S rRNA/L5/L18/L25 subcomplex. Contacts the 5S rRNA. Binds to the 5S rRNA independently of L5 and L18.

Functionally, this is one of the proteins that binds to the 5S RNA in the ribosome where it forms part of the central protuberance. This chain is Large ribosomal subunit protein bL25, found in Bartonella bacilliformis (strain ATCC 35685 / KC583 / Herrer 020/F12,63).